Here is a 576-residue protein sequence, read N- to C-terminus: Gamma-aminobutyric acid receptor subunit beta (576 aa).

An N-terminal signal peptide occupies residues Met-1 to Ala-29. At Met-30–Tyr-268 the chain is on the extracellular side. Asn-56 is a glycosylation site (N-linked (GlcNAc...) asparagine). Cys-183 and Cys-197 form a disulfide bridge. An N-linked (GlcNAc...) asparagine glycan is attached at Asn-251. A run of 3 helical transmembrane segments spans residues Leu-269–Leu-289, Val-298–Pro-320, and Val-330–Gly-350. At Tyr-351–Arg-540 the chain is on the cytoplasmic side. Disordered regions lie at residues Gln-372–Ser-418 and His-452–Glu-507. Over residues His-398–Val-412 the composition is skewed to basic residues. A compositionally biased stretch (pro residues) spans Pro-475–Pro-490. Residues Pro-491–Pro-501 show a composition bias toward gly residues. Residues Ile-541–Val-561 form a helical membrane-spanning segment.

It belongs to the ligand-gated ion channel (TC 1.A.9) family. Gamma-aminobutyric acid receptor (TC 1.A.9.5) subfamily. In terms of assembly, homomultimer.

It localises to the postsynaptic cell membrane. The protein localises to the cell membrane. GABA, an inhibitory neurotransmitter, mediates neuronal inhibition by binding to the GABA receptor and opening an integral chloride channel. The sequence is that of Gamma-aminobutyric acid receptor subunit beta from Musca domestica (House fly).